Here is a 200-residue protein sequence, read N- to C-terminus: 3-isopropylmalate dehydratase small subunit (200 aa).

The protein belongs to the LeuD family. LeuD type 1 subfamily. Heterodimer of LeuC and LeuD.

The catalysed reaction is (2R,3S)-3-isopropylmalate = (2S)-2-isopropylmalate. Its pathway is amino-acid biosynthesis; L-leucine biosynthesis; L-leucine from 3-methyl-2-oxobutanoate: step 2/4. Its function is as follows. Catalyzes the isomerization between 2-isopropylmalate and 3-isopropylmalate, via the formation of 2-isopropylmaleate. This chain is 3-isopropylmalate dehydratase small subunit, found in Vibrio atlanticus (strain LGP32) (Vibrio splendidus (strain Mel32)).